A 219-amino-acid chain; its full sequence is Flagellar L-ring protein (219 aa).

An N-terminal signal peptide occupies residues 1 to 14 (MKRLVLISLVLAAG). A lipid anchor (N-palmitoyl cysteine) is attached at cysteine 15. The S-diacylglycerol cysteine moiety is linked to residue cysteine 15.

This sequence belongs to the FlgH family. As to quaternary structure, the basal body constitutes a major portion of the flagellar organelle and consists of four rings (L,P,S, and M) mounted on a central rod.

It is found in the cell outer membrane. Its subcellular location is the bacterial flagellum basal body. In terms of biological role, assembles around the rod to form the L-ring and probably protects the motor/basal body from shearing forces during rotation. In Dechloromonas aromatica (strain RCB), this protein is Flagellar L-ring protein.